Consider the following 98-residue polypeptide: MSLVYMNIMIAFSISLLGLLMYRSHLMSSLLCLEGMMLALFILSTIMILNIHFTLASMIPIILLVFAACEAAVGLSLLVMVSNTYGVDYVQNLNLLQC.

The next 3 membrane-spanning stretches (helical) occupy residues 1–21, 25–45, and 67–87; these read MSLV…GLLM, HLMS…ILST, and AACE…TYGV.

Belongs to the complex I subunit 4L family. In terms of assembly, core subunit of respiratory chain NADH dehydrogenase (Complex I) which is composed of 45 different subunits.

It is found in the mitochondrion inner membrane. It carries out the reaction a ubiquinone + NADH + 5 H(+)(in) = a ubiquinol + NAD(+) + 4 H(+)(out). Its function is as follows. Core subunit of the mitochondrial membrane respiratory chain NADH dehydrogenase (Complex I) which catalyzes electron transfer from NADH through the respiratory chain, using ubiquinone as an electron acceptor. Part of the enzyme membrane arm which is embedded in the lipid bilayer and involved in proton translocation. The sequence is that of NADH-ubiquinone oxidoreductase chain 4L (MT-ND4L) from Talpa europaea (European mole).